A 178-amino-acid polypeptide reads, in one-letter code: ATP synthase subunit d, mitochondrial (178 aa).

The disordered stretch occupies residues 149–178 (NKPTFWPHTPEEQVGYKSKEQLEAEAQGHH). The segment covering 165–178 (KSKEQLEAEAQGHH) has biased composition (basic and acidic residues).

Belongs to the ATPase d subunit family. In terms of assembly, F-type ATPases have 2 components, CF(1) - the catalytic core - and CF(0) - the membrane proton channel. CF(0) seems to have nine subunits: a, b, c, d, e, f, g, F6 and 8 (or A6L).

It is found in the mitochondrion. The protein resides in the mitochondrion inner membrane. Functionally, mitochondrial membrane ATP synthase (F(1)F(0) ATP synthase or Complex V) produces ATP from ADP in the presence of a proton gradient across the membrane which is generated by electron transport complexes of the respiratory chain. F-type ATPases consist of two structural domains, F(1) - containing the extramembraneous catalytic core, and F(0) - containing the membrane proton channel, linked together by a central stalk and a peripheral stalk. During catalysis, ATP synthesis in the catalytic domain of F(1) is coupled via a rotary mechanism of the central stalk subunits to proton translocation. Part of the complex F(0) domain and the peripheric stalk, which acts as a stator to hold the catalytic alpha(3)beta(3) subcomplex and subunit a/ATP6 static relative to the rotary elements. This chain is ATP synthase subunit d, mitochondrial, found in Drosophila melanogaster (Fruit fly).